A 209-amino-acid chain; its full sequence is Ribosomal RNA large subunit methyltransferase E (209 aa).

Residues glycine 63, tryptophan 65, aspartate 83, aspartate 99, and aspartate 124 each contribute to the S-adenosyl-L-methionine site. Lysine 164 serves as the catalytic Proton acceptor.

The protein belongs to the class I-like SAM-binding methyltransferase superfamily. RNA methyltransferase RlmE family.

Its subcellular location is the cytoplasm. It carries out the reaction uridine(2552) in 23S rRNA + S-adenosyl-L-methionine = 2'-O-methyluridine(2552) in 23S rRNA + S-adenosyl-L-homocysteine + H(+). Its function is as follows. Specifically methylates the uridine in position 2552 of 23S rRNA at the 2'-O position of the ribose in the fully assembled 50S ribosomal subunit. The chain is Ribosomal RNA large subunit methyltransferase E from Serratia proteamaculans (strain 568).